A 180-amino-acid polypeptide reads, in one-letter code: Large ribosomal subunit protein uL6 (180 aa).

The protein belongs to the universal ribosomal protein uL6 family. As to quaternary structure, part of the 50S ribosomal subunit.

In terms of biological role, this protein binds to the 23S rRNA, and is important in its secondary structure. It is located near the subunit interface in the base of the L7/L12 stalk, and near the tRNA binding site of the peptidyltransferase center. The sequence is that of Large ribosomal subunit protein uL6 from Clostridium botulinum (strain Eklund 17B / Type B).